Here is a 251-residue protein sequence, read N- to C-terminus: Triosephosphate isomerase (251 aa).

Position 9–11 (N9–K11) interacts with substrate. H95 serves as the catalytic Electrophile. Residue E167 is the Proton acceptor of the active site. Residues G173, S213, and G234–G235 each bind substrate. The residue at position 213 (S213) is a Phosphoserine.

The protein belongs to the triosephosphate isomerase family. As to quaternary structure, homodimer.

The protein resides in the cytoplasm. The enzyme catalyses D-glyceraldehyde 3-phosphate = dihydroxyacetone phosphate. The protein operates within carbohydrate biosynthesis; gluconeogenesis. It participates in carbohydrate degradation; glycolysis; D-glyceraldehyde 3-phosphate from glycerone phosphate: step 1/1. Involved in the gluconeogenesis. Catalyzes stereospecifically the conversion of dihydroxyacetone phosphate (DHAP) to D-glyceraldehyde-3-phosphate (G3P). The sequence is that of Triosephosphate isomerase from Bacillus mycoides (strain KBAB4) (Bacillus weihenstephanensis).